The sequence spans 657 residues: L-type lectin-domain containing receptor kinase I.8 (657 aa).

Positions 1–23 (MAPGLDLIWMVISFLLLIHLSSQ) are cleaved as a signal peptide. The Extracellular segment spans residues 24–282 (QETGFSFNGF…QVPHPKMKTS (259 aa)). The legume-lectin like stretch occupies residues 25-257 (ETGFSFNGFR…NHYILGWSFS (233 aa)). 5 N-linked (GlcNAc...) asparagine glycosylation sites follow: Asn-74, Asn-124, Asn-181, Asn-204, and Asn-225. A helical membrane pass occupies residues 283–303 (LLLILLLIVLGIILLVLLVGA). Residues 304 to 657 (YLYRRNKYAE…THSIQYGIGR (354 aa)) lie on the Cytoplasmic side of the membrane. A Protein kinase domain is found at 339–611 (FHKDGFLGKG…VQYLDRQVSL (273 aa)). ATP contacts are provided by residues 345 to 353 (LGKGGFGEV) and Lys-366. Asp-462 (proton acceptor) is an active-site residue.

It in the C-terminal section; belongs to the protein kinase superfamily. Ser/Thr protein kinase family. This sequence in the N-terminal section; belongs to the leguminous lectin family.

Its subcellular location is the cell membrane. The catalysed reaction is L-seryl-[protein] + ATP = O-phospho-L-seryl-[protein] + ADP + H(+). The enzyme catalyses L-threonyl-[protein] + ATP = O-phospho-L-threonyl-[protein] + ADP + H(+). Its function is as follows. Involved in resistance response to the pathogenic fungus Alternaria brassicicola. The chain is L-type lectin-domain containing receptor kinase I.8 from Arabidopsis thaliana (Mouse-ear cress).